Here is a 270-residue protein sequence, read N- to C-terminus: Surfeit locus protein 4 homolog (270 aa).

6 helical membrane-spanning segments follow: residues 65–85 (FLAT…CGMV), 93–113 (IAVG…SILW), 115–135 (FQFL…LAEA), 178–198 (LSVW…LVVL), 206–226 (ALIL…WWTI), and 243–263 (TLSV…GVSM). Residues 267 to 270 (KKKW) carry the Di-lysine motif motif.

It belongs to the SURF4 family.

It is found in the endoplasmic reticulum membrane. Functionally, endoplasmic reticulum cargo receptor that mediates the export of lipoproteins by recruiting cargos into COPII vesicles to facilitate their secretion. The protein is Surfeit locus protein 4 homolog of Drosophila melanogaster (Fruit fly).